The chain runs to 159 residues: 3-hydroxyacyl-[acyl-carrier-protein] dehydratase FabZ (159 aa).

His-58 is a catalytic residue.

Belongs to the thioester dehydratase family. FabZ subfamily.

The protein localises to the cytoplasm. The catalysed reaction is a (3R)-hydroxyacyl-[ACP] = a (2E)-enoyl-[ACP] + H2O. In terms of biological role, involved in unsaturated fatty acids biosynthesis. Catalyzes the dehydration of short chain beta-hydroxyacyl-ACPs and long chain saturated and unsaturated beta-hydroxyacyl-ACPs. The sequence is that of 3-hydroxyacyl-[acyl-carrier-protein] dehydratase FabZ from Helicobacter pylori (strain G27).